A 145-amino-acid chain; its full sequence is 3-hydroxyacyl-[acyl-carrier-protein] dehydratase FabZ (145 aa).

Histidine 49 is an active-site residue.

It belongs to the thioester dehydratase family. FabZ subfamily.

The protein resides in the cytoplasm. The catalysed reaction is a (3R)-hydroxyacyl-[ACP] = a (2E)-enoyl-[ACP] + H2O. Its function is as follows. Involved in unsaturated fatty acids biosynthesis. Catalyzes the dehydration of short chain beta-hydroxyacyl-ACPs and long chain saturated and unsaturated beta-hydroxyacyl-ACPs. This is 3-hydroxyacyl-[acyl-carrier-protein] dehydratase FabZ from Anaplasma phagocytophilum (strain HZ).